The following is a 258-amino-acid chain: Proteasome subunit alpha type-3 (258 aa).

Residues K100, K199, and K231 each participate in a glycyl lysine isopeptide (Lys-Gly) (interchain with G-Cter in ubiquitin) cross-link.

The protein belongs to the peptidase T1A family. The 26S proteasome consists of a 20S proteasome core and two 19S regulatory subunits. The 20S proteasome core is composed of 28 subunits that are arranged in four stacked rings, resulting in a barrel-shaped structure. The two end rings are each formed by seven alpha subunits, and the two central rings are each formed by seven beta subunits. The catalytic chamber with the active sites is on the inside of the barrel.

Its subcellular location is the cytoplasm. The protein localises to the nucleus. The proteasome degrades poly-ubiquitinated proteins in the cytoplasm and in the nucleus. It is essential for the regulated turnover of proteins and for the removal of misfolded proteins. The proteasome is a multicatalytic proteinase complex that is characterized by its ability to cleave peptides with Arg, Phe, Tyr, Leu, and Glu adjacent to the leaving group at neutral or slightly basic pH. It has an ATP-dependent proteolytic activity. This chain is Proteasome subunit alpha type-3 (PRE9), found in Saccharomyces cerevisiae (strain ATCC 204508 / S288c) (Baker's yeast).